Reading from the N-terminus, the 387-residue chain is Chorismate synthase (387 aa).

Positions 42 and 48 each coordinate NADP(+). FMN contacts are provided by residues 131–133 (RSS), 251–252 (QA), glycine 295, 310–314 (KPIPT), and arginine 336.

Belongs to the chorismate synthase family. As to quaternary structure, homotetramer. FMNH2 serves as cofactor.

It catalyses the reaction 5-O-(1-carboxyvinyl)-3-phosphoshikimate = chorismate + phosphate. The protein operates within metabolic intermediate biosynthesis; chorismate biosynthesis; chorismate from D-erythrose 4-phosphate and phosphoenolpyruvate: step 7/7. Its function is as follows. Catalyzes the anti-1,4-elimination of the C-3 phosphate and the C-6 proR hydrogen from 5-enolpyruvylshikimate-3-phosphate (EPSP) to yield chorismate, which is the branch point compound that serves as the starting substrate for the three terminal pathways of aromatic amino acid biosynthesis. This reaction introduces a second double bond into the aromatic ring system. The chain is Chorismate synthase from Syntrophotalea carbinolica (strain DSM 2380 / NBRC 103641 / GraBd1) (Pelobacter carbinolicus).